A 302-amino-acid chain; its full sequence is Sulfate adenylyltransferase subunit 2 (302 aa).

This sequence belongs to the PAPS reductase family. CysD subfamily. Heterodimer composed of CysD, the smaller subunit, and CysN.

It catalyses the reaction sulfate + ATP + H(+) = adenosine 5'-phosphosulfate + diphosphate. Its pathway is sulfur metabolism; hydrogen sulfide biosynthesis; sulfite from sulfate: step 1/3. Functionally, with CysN forms the ATP sulfurylase (ATPS) that catalyzes the adenylation of sulfate producing adenosine 5'-phosphosulfate (APS) and diphosphate, the first enzymatic step in sulfur assimilation pathway. APS synthesis involves the formation of a high-energy phosphoric-sulfuric acid anhydride bond driven by GTP hydrolysis by CysN coupled to ATP hydrolysis by CysD. The polypeptide is Sulfate adenylyltransferase subunit 2 (Escherichia coli O157:H7 (strain EC4115 / EHEC)).